The primary structure comprises 155 residues: Ribosomal RNA large subunit methyltransferase H (155 aa).

S-adenosyl-L-methionine-binding positions include Leu73, Gly104, and 123–128 (LSPLTL).

The protein belongs to the RNA methyltransferase RlmH family. As to quaternary structure, homodimer.

Its subcellular location is the cytoplasm. It carries out the reaction pseudouridine(1915) in 23S rRNA + S-adenosyl-L-methionine = N(3)-methylpseudouridine(1915) in 23S rRNA + S-adenosyl-L-homocysteine + H(+). In terms of biological role, specifically methylates the pseudouridine at position 1915 (m3Psi1915) in 23S rRNA. The polypeptide is Ribosomal RNA large subunit methyltransferase H (Pseudomonas savastanoi pv. phaseolicola (strain 1448A / Race 6) (Pseudomonas syringae pv. phaseolicola (strain 1448A / Race 6))).